The sequence spans 99 residues: Small ribosomal subunit protein uS14c (99 aa).

Belongs to the universal ribosomal protein uS14 family. Part of the 30S ribosomal subunit.

Its subcellular location is the plastid. It localises to the chloroplast. Binds 16S rRNA, required for the assembly of 30S particles. This Welwitschia mirabilis (Tree tumbo) protein is Small ribosomal subunit protein uS14c.